Here is a 198-residue protein sequence, read N- to C-terminus: Nicotinamidase 3 (198 aa).

Belongs to the isochorismatase family.

It carries out the reaction nicotinamide + H2O = nicotinate + NH4(+). Its pathway is cofactor biosynthesis; nicotinate biosynthesis; nicotinate from nicotinamide: step 1/1. Its function is as follows. Catalyzes the deamidation of nicotinamide, an early step in the NAD(+) salvage pathway. Prevents the accumulation of intracellular nicotinamide, a known inhibitor of poly(ADP-ribose) polymerases (PARP enzymes). In Arabidopsis thaliana (Mouse-ear cress), this protein is Nicotinamidase 3.